Here is a 273-residue protein sequence, read N- to C-terminus: Dermonecrotic toxin SdSicTox-betaIIB1bxiv (273 aa).

Residue His4 is part of the active site. 2 residues coordinate Mg(2+): Glu24 and Asp26. His40 (nucleophile) is an active-site residue. 2 disulfides stabilise this stretch: Cys44/Cys50 and Cys46/Cys189. Asp84 contributes to the Mg(2+) binding site.

The protein belongs to the arthropod phospholipase D family. Class II subfamily. The cofactor is Mg(2+). As to expression, expressed by the venom gland.

It is found in the secreted. The enzyme catalyses an N-(acyl)-sphingosylphosphocholine = an N-(acyl)-sphingosyl-1,3-cyclic phosphate + choline. The catalysed reaction is an N-(acyl)-sphingosylphosphoethanolamine = an N-(acyl)-sphingosyl-1,3-cyclic phosphate + ethanolamine. It catalyses the reaction a 1-acyl-sn-glycero-3-phosphocholine = a 1-acyl-sn-glycero-2,3-cyclic phosphate + choline. It carries out the reaction a 1-acyl-sn-glycero-3-phosphoethanolamine = a 1-acyl-sn-glycero-2,3-cyclic phosphate + ethanolamine. In terms of biological role, dermonecrotic toxins cleave the phosphodiester linkage between the phosphate and headgroup of certain phospholipids (sphingolipid and lysolipid substrates), forming an alcohol (often choline) and a cyclic phosphate. This toxin acts on sphingomyelin (SM). It may also act on ceramide phosphoethanolamine (CPE), lysophosphatidylcholine (LPC) and lysophosphatidylethanolamine (LPE), but not on lysophosphatidylserine (LPS), and lysophosphatidylglycerol (LPG). It acts by transphosphatidylation, releasing exclusively cyclic phosphate products as second products. Induces dermonecrosis, hemolysis, increased vascular permeability, edema, inflammatory response, and platelet aggregation. In Sicarius cf. damarensis (strain GJB-2008) (Six-eyed sand spider), this protein is Dermonecrotic toxin SdSicTox-betaIIB1bxiv.